Reading from the N-terminus, the 485-residue chain is Keratin, type I cytoskeletal 14 (485 aa).

The segment covering 1-15 (MATCSRQFTSSSSMK) has biased composition (polar residues). The segment at 1–21 (MATCSRQFTSSSSMKGSCGIG) is disordered. The tract at residues 1–121 (MATCSRQFTS…GLGDGLLVGS (121 aa)) is head. The tract at residues 122–157 (EKVTMQNLNDRLATYLDKVRALEEANSDLEVKIRDW) is coil 1A. An IF rod domain is found at 122 to 433 (EKVTMQNLND…RLLEGEDAHL (312 aa)). Positions 158-175 (YQRQRPTEIKDYSPYFKT) are linker 1. The tract at residues 176-267 (IEDLKSKILA…KNHEEEMASM (92 aa)) is coil 1B. The tract at residues 268-290 (RGQVGGDVNVEMDAAPGVDLSRI) is linker 12. The coil 2 stretch occupies residues 291–429 (LNEMRDQYEK…ATYRRLLEGE (139 aa)). A tail region spans residues 430–485 (DAHLSSAQFSSSSQFSSGSQSSRDVTSTNRQIRTKVMDVHDGKVVSTHEQVLRTKN). An interaction with Type I keratins and keratin filaments region spans residues 432-485 (HLSSAQFSSSSQFSSGSQSSRDVTSTNRQIRTKVMDVHDGKVVSTHEQVLRTKN). Residues 437 to 451 (QFSSSSQFSSGSQSS) show a composition bias toward low complexity. Residues 437–458 (QFSSSSQFSSGSQSSRDVTSTN) form a disordered region. Serine 448 bears the Phosphoserine mark.

This sequence belongs to the intermediate filament family. As to quaternary structure, heterotetramer of two type I and two type II keratins. Forms a disulfide-linked heterodimer (via 2B domains) with KRT5 (via 2B domains). Forms a heterodimer with KRT1; the interaction is more abundant in the absence of KRT5. Interacts with TRADD and with keratin filaments. Associates with other type I keratins. Interacts with EPPK1. Interacts with KLHL24. Interacts with PKP1 (via N-terminus) and PKP2. Post-translationally, a disulfide bond is formed between rather than within filaments and promotes the formation of a keratin filament cage around the nucleus. In terms of processing, ubiquitinated by the BCR(KLHL24) E3 ubiquitin ligase complex. As to expression, expressed in most cells of squamous cell carcinomas, in spinous and suprabasal cells around the branching papillary region of papillomas, and weakly in a few proliferative cells of hyperplastic tissue.

Its subcellular location is the cytoplasm. The protein localises to the nucleus. In terms of biological role, the nonhelical tail domain is involved in promoting KRT5-KRT14 filaments to self-organize into large bundles and enhances the mechanical properties involved in resilience of keratin intermediate filaments in vitro. In Rattus norvegicus (Rat), this protein is Keratin, type I cytoskeletal 14 (Krt14).